We begin with the raw amino-acid sequence, 476 residues long: Glycogen synthase (476 aa).

An ADP-alpha-D-glucose-binding site is contributed by lysine 15.

The protein belongs to the glycosyltransferase 1 family. Bacterial/plant glycogen synthase subfamily.

The enzyme catalyses [(1-&gt;4)-alpha-D-glucosyl](n) + ADP-alpha-D-glucose = [(1-&gt;4)-alpha-D-glucosyl](n+1) + ADP + H(+). The protein operates within glycan biosynthesis; glycogen biosynthesis. Functionally, synthesizes alpha-1,4-glucan chains using ADP-glucose. The sequence is that of Glycogen synthase from Lactobacillus acidophilus (strain ATCC 700396 / NCK56 / N2 / NCFM).